A 446-amino-acid polypeptide reads, in one-letter code: N-succinylarginine dihydrolase (446 aa).

Substrate contacts are provided by residues 19–28, Asn-110, and 137–138; these read AGLSFGNVAS and HR. The active site involves Glu-174. Arg-213 contributes to the substrate binding site. His-249 is an active-site residue. Substrate contacts are provided by Asp-251 and Asn-364. The active-site Nucleophile is Cys-370.

Belongs to the succinylarginine dihydrolase family. As to quaternary structure, homodimer.

The catalysed reaction is N(2)-succinyl-L-arginine + 2 H2O + 2 H(+) = N(2)-succinyl-L-ornithine + 2 NH4(+) + CO2. It functions in the pathway amino-acid degradation; L-arginine degradation via AST pathway; L-glutamate and succinate from L-arginine: step 2/5. In terms of biological role, catalyzes the hydrolysis of N(2)-succinylarginine into N(2)-succinylornithine, ammonia and CO(2). This chain is N-succinylarginine dihydrolase, found in Burkholderia cenocepacia (strain ATCC BAA-245 / DSM 16553 / LMG 16656 / NCTC 13227 / J2315 / CF5610) (Burkholderia cepacia (strain J2315)).